A 252-amino-acid polypeptide reads, in one-letter code: Chitooligosaccharide deacetylase (252 aa).

Mg(2+) is bound by residues H61 and H125.

Belongs to the YdjC deacetylase family. ChbG subfamily. As to quaternary structure, homodimer. Mg(2+) is required as a cofactor.

It is found in the cytoplasm. The enzyme catalyses N,N'-diacetylchitobiose + H2O = N-acetyl-beta-D-glucosaminyl-(1-&gt;4)-D-glucosamine + acetate. It carries out the reaction diacetylchitobiose-6'-phosphate + H2O = N'-monoacetylchitobiose-6'-phosphate + acetate. It participates in glycan degradation; chitin degradation. Involved in the degradation of chitin. ChbG is essential for growth on the acetylated chitooligosaccharides chitobiose and chitotriose but is dispensable for growth on cellobiose and chitosan dimer, the deacetylated form of chitobiose. Deacetylation of chitobiose-6-P and chitotriose-6-P is necessary for both the activation of the chb promoter by the regulatory protein ChbR and the hydrolysis of phosphorylated beta-glucosides by the phospho-beta-glucosidase ChbF. Catalyzes the removal of only one acetyl group from chitobiose-6-P to yield monoacetylchitobiose-6-P, the inducer of ChbR and the substrate of ChbF. The protein is Chitooligosaccharide deacetylase of Klebsiella pneumoniae (strain 342).